The chain runs to 113 residues: Protein RALF-like 31 (113 aa).

The N-terminal stretch at 1–21 is a signal peptide; sequence MFNSTALVIFAILFLLISADA. A propeptide spans 22-58 (removed in mature form); the sequence is FPIPSPNGEIDAMLIRNSIIGEDEDLMPTEISRRVLM. Cystine bridges form between Cys76-Cys86 and Cys98-Cys104.

This sequence belongs to the plant rapid alkalinization factor (RALF) family. Proteolytically cleaved, probably by S1P, a subtilisin-like serine protease (subtilase).

It is found in the secreted. Functionally, cell signaling peptide that may regulate plant stress, growth, and development. Mediates a rapid alkalinization of extracellular space by mediating a transient increase in the cytoplasmic Ca(2+) concentration leading to a calcium-dependent signaling events through a cell surface receptor and a concomitant activation of some intracellular mitogen-activated protein kinases. This Arabidopsis thaliana (Mouse-ear cress) protein is Protein RALF-like 31 (RALFL31).